Here is a 466-residue protein sequence, read N- to C-terminus: Teichoic acids export ATP-binding protein TagH (466 aa).

One can recognise an ABC transporter domain in the interval 27 to 249 (NKAKSLIGSN…YEKFVQWFKK (223 aa)). Residue 63 to 70 (GLNGAGKS) coordinates ATP. Residues 250–466 (LPKKEQEKFK…TTEQSDGANQ (217 aa)) are unknown. Disordered regions lie at residues 356–403 (NMTS…SNQN) and 439–466 (IHPG…GANQ). Residues 373-384 (PKKKVSQAKKTT) are compositionally biased toward basic residues. The span at 385–403 (KVSSTQKNTSSSSSTSNQN) shows a compositional bias: low complexity. In terms of domain architecture, LysM spans 403–447 (NTYIVQAGDSLSIIAENHGYSVEEIQQVNPGVDFSVIHPGQEINL). Residues 449–466 (EPTTSANSTTEQSDGANQ) show a composition bias toward polar residues.

It belongs to the ABC transporter superfamily. Teichoic acids exporter (TC 3.A.1.104.1) family. In terms of assembly, the complex is composed of two ATP-binding proteins (TagH) and two transmembrane proteins (TagG).

Its subcellular location is the cell membrane. It carries out the reaction ATP + H2O + teichoic acidSide 1 = ADP + phosphate + teichoic acidSide 2.. Functionally, part of the ABC transporter complex TagGH involved in teichoic acids export. Responsible for energy coupling to the transport system. This Lactococcus lactis subsp. lactis (strain IL1403) (Streptococcus lactis) protein is Teichoic acids export ATP-binding protein TagH.